Here is a 181-residue protein sequence, read N- to C-terminus: Histone deacetylase complex subunit SAP30L-A (181 aa).

2 disulfide bridges follow: Cys26–Cys27 and Cys35–Cys71. The Atypical zinc-finger motif lies at 26 to 74; the sequence is CCLIDGGERCPRPAGNASFSKRVQKSISQKKLKLDIDKNVRHLYICDFH. The disordered stretch occupies residues 82 to 103; sequence RNKRKRKTSDDGGDSPEHETDI. The Nuclear localization signal (NLS) signature appears at 83 to 88; the sequence is NKRKRK. Positions 85–87 are important for DNA and phosphoinositide binding; sequence RKR.

The protein belongs to the SAP30 family. Interacts with components of the histone deacetylase complex sin3a, hdac1 and hdac2. Binds histones and nucleosomes.

Its subcellular location is the nucleus. It is found in the nucleolus. Its function is as follows. Functions as a transcription repressor, probably via its interaction with histone deacetylase complexes. Involved in the functional recruitment of the class 1 Sin3-histone deacetylase complex (HDAC) to the nucleolus. Binds DNA, apparently without sequence-specificity, and bends bound double-stranded DNA. Binds phosphoinositol phosphates (phosphoinositol 3-phosphate, phosphoinositol 4-phosphate and phosphoinositol 5-phosphate) via the same basic sequence motif that mediates DNA binding and nuclear import. In Xenopus laevis (African clawed frog), this protein is Histone deacetylase complex subunit SAP30L-A (sap30l-a).